We begin with the raw amino-acid sequence, 531 residues long: Cytochrome P450 monooxygenase acuC (531 aa).

A helical transmembrane segment spans residues 3–23; that stretch reads PIVWLLGGAIALLVVVIRAAW. A heme-binding site is contributed by Cys447.

The protein belongs to the cytochrome P450 family. It depends on heme as a cofactor.

It localises to the endoplasmic reticulum membrane. The enzyme catalyses 3-methylphenol + reduced [NADPH--hemoprotein reductase] + O2 = 3-hydroxybenzyl alcohol + oxidized [NADPH--hemoprotein reductase] + H2O + H(+). It participates in secondary metabolite biosynthesis. Its function is as follows. Cytochrome P450 monooxygenase; part of the gene cluster that mediates the biosynthesis of aculins. The pathway begins with the synthesis of 6-methylsalicylic acid by the polyketide synthase (PKS) acuA via condensation of acetate and malonate units. The 6-methylsalicylic acid decarboxylase acuB then catalyzes the decarboxylation of 6-methylsalicylic acid to yield m-cresol (also known as 3-methylphenol). These first reactions occur in the cytosol. The intermediate m-cresol is then transported into the endoplasmic reticulum where the cytochrome P450 monooxygenase acuC converts it to m-hydroxybenzyl alcohol, which is further converted to gentisyl alcohol by the cytochrome P450 monooxygenase acuD. Gentisyl alcohol is further oxidized by the oxidoreductase acuE that probably catalyzes hydroxylation of the aromatic ring. The aromatic system might then be opened by oxidation through a Baeyer-Villiger type of oxidation, which could be catalyzed by acuF, with the carboxylic acid at C-1 subsequently reduced to an aldehyde by acuG. Subsequently, a hemiacetal is formed, before the dehydrogenase acuH would reduce the double bond between C-4 and C-6. Finally, keto-enol tautomerism results in formation of aculinic acid, which exists as two diastereomers (both R/S configurations at C-1) by non-enzymatic hemiacetal formation. The carboxypeptidase acuI could be involved in the linking of aculinic acid to an aculene A moiety produced by the aculene biosynthesis cluster and which leads to the production of aculin A. AcuI may also be involved in the attachment of proline to aculinic acid to form epi-aculins A and B. The protein is Cytochrome P450 monooxygenase acuC of Aspergillus aculeatus (strain ATCC 16872 / CBS 172.66 / WB 5094).